The primary structure comprises 404 residues: Cysteine desulfurase IscS (404 aa).

Residues 75 to 76 (AT), Asn155, Gln183, and 203 to 205 (SAH) each bind pyridoxal 5'-phosphate. Position 206 is an N6-(pyridoxal phosphate)lysine (Lys206). Residue Thr243 coordinates pyridoxal 5'-phosphate. Cys328 functions as the Cysteine persulfide intermediate in the catalytic mechanism. Cys328 lines the [2Fe-2S] cluster pocket.

It belongs to the class-V pyridoxal-phosphate-dependent aminotransferase family. NifS/IscS subfamily. In terms of assembly, homodimer. Forms a heterotetramer with IscU, interacts with other sulfur acceptors. It depends on pyridoxal 5'-phosphate as a cofactor.

It is found in the cytoplasm. It catalyses the reaction (sulfur carrier)-H + L-cysteine = (sulfur carrier)-SH + L-alanine. It participates in cofactor biosynthesis; iron-sulfur cluster biosynthesis. In terms of biological role, master enzyme that delivers sulfur to a number of partners involved in Fe-S cluster assembly, tRNA modification or cofactor biosynthesis. Catalyzes the removal of elemental sulfur atoms from cysteine to produce alanine. Functions as a sulfur delivery protein for Fe-S cluster synthesis onto IscU, an Fe-S scaffold assembly protein, as well as other S acceptor proteins. This chain is Cysteine desulfurase IscS, found in Neisseria meningitidis serogroup A / serotype 4A (strain DSM 15465 / Z2491).